A 314-amino-acid polypeptide reads, in one-letter code: Methionyl-tRNA formyltransferase (314 aa).

Residue 113–116 (SLLP) participates in (6S)-5,6,7,8-tetrahydrofolate binding.

It belongs to the Fmt family.

It carries out the reaction L-methionyl-tRNA(fMet) + (6R)-10-formyltetrahydrofolate = N-formyl-L-methionyl-tRNA(fMet) + (6S)-5,6,7,8-tetrahydrofolate + H(+). In terms of biological role, attaches a formyl group to the free amino group of methionyl-tRNA(fMet). The formyl group appears to play a dual role in the initiator identity of N-formylmethionyl-tRNA by promoting its recognition by IF2 and preventing the misappropriation of this tRNA by the elongation apparatus. This is Methionyl-tRNA formyltransferase from Pseudomonas aeruginosa (strain LESB58).